Here is a 140-residue protein sequence, read N- to C-terminus: ATP synthase epsilon chain (140 aa).

The protein belongs to the ATPase epsilon chain family. In terms of assembly, F-type ATPases have 2 components, CF(1) - the catalytic core - and CF(0) - the membrane proton channel. CF(1) has five subunits: alpha(3), beta(3), gamma(1), delta(1), epsilon(1). CF(0) has three main subunits: a, b and c.

The protein resides in the cell inner membrane. Its function is as follows. Produces ATP from ADP in the presence of a proton gradient across the membrane. This chain is ATP synthase epsilon chain, found in Colwellia psychrerythraea (strain 34H / ATCC BAA-681) (Vibrio psychroerythus).